Consider the following 35-residue polypeptide: MSDINATRLPIWGIGCNPCVGDDVTTLLTRGEALC.

Residues 1–10 (MSDINATRLP) constitute a propeptide that is removed on maturation. I11 is modified ((3R,4R)-4,5-dihydroxyisoleucine; in form alpha-amanitin). Residue I11 is modified to (3R,4S)-4-hydroxyisoleucine; in form gamma-amanitin. Positions 11 to 18 (IWGIGCNP) form a cross-link, cyclopeptide (Ile-Pro). Positions 12–16 (WGIGC) form a cross-link, 2'-cysteinyl-6'-hydroxytryptophan sulfoxide (Trp-Cys). P18 carries the 4-hydroxyproline modification. A propeptide spanning residues 19-35 (CVGDDVTTLLTRGEALC) is cleaved from the precursor.

The protein belongs to the MSDIN fungal toxin family. Post-translationally, processed by the macrocyclase-peptidase enzyme POPB to yield a toxic cyclic decapeptide. POPB first removes 10 residues from the N-terminus. Conformational trapping of the remaining peptide forces the enzyme to release this intermediate rather than proceed to macrocyclization. The enzyme rebinds the remaining peptide in a different conformation and catalyzes macrocyclization of the N-terminal 8 residues.

Major toxin belonging to the bicyclic octapeptides amatoxins that acts by binding non-competitively to RNA polymerase II and greatly slowing the elongation of transcripts from target promoters. In Amanita bisporigera (Destroying angel), this protein is Alpha-amanitin proprotein.